Consider the following 153-residue polypeptide: Transcriptional repressor NrdR 3 (153 aa).

Residues 1–26 are disordered; that stretch reads MRCPFCGHDDTQVKDSRPTEDNSAIR. The segment at 3-34 is a zinc-finger region; sequence CPFCGHDDTQVKDSRPTEDNSAIRRRRSCPEC. Residues 7 to 24 are compositionally biased toward basic and acidic residues; sequence GHDDTQVKDSRPTEDNSA. Residues 49–139 enclose the ATP-cone domain; it reads LVVIKKDGGR…VYRNFREAKD (91 aa).

This sequence belongs to the NrdR family. Zn(2+) serves as cofactor.

Its function is as follows. Negatively regulates transcription of bacterial ribonucleotide reductase nrd genes and operons by binding to NrdR-boxes. The chain is Transcriptional repressor NrdR 3 from Paramagnetospirillum magneticum (strain ATCC 700264 / AMB-1) (Magnetospirillum magneticum).